We begin with the raw amino-acid sequence, 105 residues long: NADH-quinone oxidoreductase subunit K (105 aa).

3 consecutive transmembrane segments (helical) span residues leucine 8 to leucine 28, isoleucine 34 to phenylalanine 54, and valine 65 to leucine 85.

This sequence belongs to the complex I subunit 4L family. In terms of assembly, NDH-1 is composed of 14 different subunits. Subunits NuoA, H, J, K, L, M, N constitute the membrane sector of the complex.

The protein localises to the cell inner membrane. The enzyme catalyses a quinone + NADH + 5 H(+)(in) = a quinol + NAD(+) + 4 H(+)(out). NDH-1 shuttles electrons from NADH, via FMN and iron-sulfur (Fe-S) centers, to quinones in the respiratory chain. The immediate electron acceptor for the enzyme in this species is believed to be ubiquinone. Couples the redox reaction to proton translocation (for every two electrons transferred, four hydrogen ions are translocated across the cytoplasmic membrane), and thus conserves the redox energy in a proton gradient. The polypeptide is NADH-quinone oxidoreductase subunit K (Acidithiobacillus ferrooxidans (strain ATCC 23270 / DSM 14882 / CIP 104768 / NCIMB 8455) (Ferrobacillus ferrooxidans (strain ATCC 23270))).